We begin with the raw amino-acid sequence, 817 residues long: MDVADAQVGQLRVKDEVGIRAQKLFQDFLEEFKEDGEIKYTRPAASLESPDRCTLEVSFEDVEKYDQNLATAIIEEYYHIYPFLCQSVSNYVKDRIGLKTQKDCYVAFTEVPTRHKVRDLTTSKIGTLIRISGQVVRTHPVHPELVSGVFMCLDCQTEIRNVEQQFKFTNPTICRNPVCSNRKRFMLDVEKSLFLDFQKIRIQETQAELPRGCIPRAVEIILRSELVETVQAGDRYDFTGTLIVVPDVSVLAGVGTRAENSSRHKPGEGMDGVTGLKALGMRELNYRMAFLACSVQATTARFGGTDLPMSEVTAEDMKKQMTDAEWHKIYEMSKDRNLYQNLISSLFPSIYGNDEVKRGILLQQFGGVAKTTTEKTSLRGDINVCIVGDPSTAKSQFLKQVSDFSPRAIYTSGKASSAAGLTAAVVRDEESFDFVIEAGALMLADNGICCIDEFDKMDQRDQVAIHEAMEQQTISIARAGVRATLNARTSILAAANPINGRYDRSKSLQQNIQLSAPIMSRFDLFFILVDECNEVVDYAIARKIVDLHSNIEESVERAYTREEVLRYVTFARQFKPVISQEAGHMLVENYGHLRQRDTGTSGRSTWRITVRQLESMIRLSEAMAKLECSNRVLERHVKEAFRLLNKSIIRVEQPDIHLDDDEGLDMDDGIQHDIDMENNGAAANVDENNGMDTSASGAVQKKKFTLSFEDYKNLSTMLVLHMRAEEARCEVEGNDTGIKRSNVVTWYLEQVADQIESEDELISRKNLIEKLIDRLIYHDQVIIPLKTSTLKPRIQVQKDFVEEDDPLLVVHPNYVVE.

The C4-type zinc finger occupies 152–179; the sequence is CLDCQTEIRNVEQQFKFTNPTICRNPVC. Positions 338–544 constitute an MCM domain; it reads LYQNLISSLF…VVDYAIARKI (207 aa). ATP is bound by residues Ser391, Thr392, Ala393, Lys394, Ser395, and Asn496. The Arginine finger motif lies at 520 to 523; sequence SRFD. Residues Arg611 and Glu614 each contribute to the ADP site.

The protein belongs to the MCM family. Component of the Mcm2-7 complex. The complex forms a toroidal hexameric ring with the proposed subunit order Mcm2-Mcm6-Mcm4-Mcm7-Mcm3-Mcm5. The heterodimers of Mcm4/Mcm6 and Mcm3/Mcm5 interact with Mcm2 and Mcm7. In terms of tissue distribution, in stage 12 embryos, strongly expressed in the CNS and weakly in the gut.

The protein resides in the nucleus. The catalysed reaction is ATP + H2O = ADP + phosphate + H(+). Acts as a component of the Mcm2-7 complex (Mcm complex) which is the putative replicative helicase essential for 'once per cell cycle' DNA replication initiation and elongation in eukaryotic cells. Core component of CDC45-MCM-GINS (CMG) helicase, the molecular machine that unwinds template DNA during replication, and around which the replisome is built. The active ATPase sites in the Mcm2-7 ring are formed through the interaction surfaces of two neighboring subunits such that a critical structure of a conserved arginine finger motif is provided in trans relative to the ATP-binding site of the Walker A box of the adjacent subunit. The six ATPase active sites, however, are likely to contribute differentially to the complex helicase activity Required for DNA replication and cell proliferation. Required for mitotic cycles, endocycles, and the special S phase associated with the amplification of chorion genes; has a role in origin unwinding or fork elongation at chorion loci. The protein is DNA replication licensing factor Mcm6 of Drosophila melanogaster (Fruit fly).